Consider the following 793-residue polypeptide: Pentatricopeptide repeat-containing protein At1g03100, mitochondrial (793 aa).

The transit peptide at 1–87 (MFSLRKTKLQ…REAISSISGS (87 aa)) directs the protein to the mitochondrion. PPR repeat units lie at residues 257 to 291 (NTQV…GVKA), 292 to 322 (DANL…IDEA), 330 to 364 (FWQF…GKVA), 458 to 492 (TEEI…DSPV), 495 to 529 (DNSM…GVRT), 530 to 564 (GSSV…GIQL), 565 to 599 (DSSC…KILR), 601 to 631 (GNQK…IREV), 637 to 671 (GVHD…GHSP), 672 to 707 (NAQT…AAAT), and 713 to 747 (DQEL…NMFV).

This sequence belongs to the PPR family. P subfamily.

Its subcellular location is the mitochondrion. The chain is Pentatricopeptide repeat-containing protein At1g03100, mitochondrial from Arabidopsis thaliana (Mouse-ear cress).